A 321-amino-acid chain; its full sequence is Glucokinase (321 aa).

Gly-8–Thr-13 serves as a coordination point for ATP.

The protein belongs to the bacterial glucokinase family.

It localises to the cytoplasm. It carries out the reaction D-glucose + ATP = D-glucose 6-phosphate + ADP + H(+). The protein is Glucokinase of Psychromonas ingrahamii (strain DSM 17664 / CCUG 51855 / 37).